The chain runs to 425 residues: Serine--tRNA ligase (425 aa).

Disordered regions lie at residues 43 to 68 and 108 to 131; these read QRSSLQAEGNRIGKEVGQRIQQGSDP and LPNLPSPDCPEGRDENDNQERHCW. Over residues 117-131 the composition is skewed to basic and acidic residues; sequence PEGRDENDNQERHCW. An L-serine-binding site is contributed by 233 to 235; it reads TAE. Residue 264–266 coordinates ATP; sequence RRE. Residue glutamate 287 coordinates L-serine. ATP is bound at residue 351 to 354; the sequence is EISS. Serine 385 is an L-serine binding site.

This sequence belongs to the class-II aminoacyl-tRNA synthetase family. Type-1 seryl-tRNA synthetase subfamily. As to quaternary structure, homodimer. The tRNA molecule binds across the dimer.

The protein resides in the cytoplasm. The catalysed reaction is tRNA(Ser) + L-serine + ATP = L-seryl-tRNA(Ser) + AMP + diphosphate + H(+). The enzyme catalyses tRNA(Sec) + L-serine + ATP = L-seryl-tRNA(Sec) + AMP + diphosphate + H(+). The protein operates within aminoacyl-tRNA biosynthesis; selenocysteinyl-tRNA(Sec) biosynthesis; L-seryl-tRNA(Sec) from L-serine and tRNA(Sec): step 1/1. In terms of biological role, catalyzes the attachment of serine to tRNA(Ser). Is also able to aminoacylate tRNA(Sec) with serine, to form the misacylated tRNA L-seryl-tRNA(Sec), which will be further converted into selenocysteinyl-tRNA(Sec). This is Serine--tRNA ligase from Prochlorococcus marinus (strain MIT 9303).